A 130-amino-acid chain; its full sequence is Small ribosomal subunit protein uS17m (130 aa).

The N-terminal 20 residues, 1-20, are a transit peptide targeting the mitochondrion; sequence MSVVRSSVHARWIVGKVIGT.

Belongs to the universal ribosomal protein uS17 family. As to quaternary structure, component of the mitochondrial small ribosomal subunit (mt-SSU). Mature mammalian 55S mitochondrial ribosomes consist of a small (28S) and a large (39S) subunit. The 28S small subunit contains a 12S ribosomal RNA (12S mt-rRNA) and 30 different proteins. The 39S large subunit contains a 16S rRNA (16S mt-rRNA), a copy of mitochondrial valine transfer RNA (mt-tRNA(Val)), which plays an integral structural role, and 52 different proteins.

The protein resides in the mitochondrion. The sequence is that of Small ribosomal subunit protein uS17m (MRPS17) from Homo sapiens (Human).